The chain runs to 102 residues: Small ribosomal subunit protein uS10 (102 aa).

This sequence belongs to the universal ribosomal protein uS10 family. In terms of assembly, part of the 30S ribosomal subunit.

Its function is as follows. Involved in the binding of tRNA to the ribosomes. The protein is Small ribosomal subunit protein uS10 of Leptospira biflexa serovar Patoc (strain Patoc 1 / Ames).